Here is a 782-residue protein sequence, read N- to C-terminus: MKHMFKNILFHKKGKHDKNDAIKKAFSLFSVPSNENERIIKFWPLKFKEKDEETLYIIKLCDNMYSKKYVILVSHLISLLLMYSVCLIVGNINDLFSVLKLTYILLHTFTAINIILILTLHATHYVEMFKSIKGEIFIFYIMMIFVIWCSWLFILFNNIKDLLPIVVNVNNFLYATYANNKINIVLGFFAYLPIFYLITIIPCRICYSCAFDILFFIMKVAIFSVYYLITMKSYILTDNIFMIISALVGSLFIFVIRYIIEIQRRLSFHNWNKQTKQIIKLKKTLKEEKQKLSTTNIEEIYNLINDSIGNYYNENKKQKETDWSIVNNLEKILNILKEDNLFSPDLKTINKKNYNHIYGYIMDLKKQKEIINDKIGSKEEPEAESESECVDESKEGSQIESIFESISDVKQKKKSDLAYTSSYEEKENEILKYDFNMNMDKENISIDIWNTKFLDRKSPNYDAFIKIGYILLNKYYISNQNISVKILYSLLYEMKKGYNDVPYHNSIHAAMVTKHCSILITSLDTVNILKDNEMAAFLISALGHDIGHFGRTNMFLKNCSNFLRIIYNDKSILENYHCSYLFNILSKEEHNIFKKEDLKTLTNLRQLIIEVILATDMSKHIKILAQFRIKSIKIKSYIEKNIILCLKMIIKAADLSHNCVDWSEHYLWVKRLVNEFYSEGDDLLERGFELNPLFDRKAHNNFIQIQRTFLRELVLPLISSLKTLDTSTITQLMLSHVKRNYSKWTKIEKDETKKEKYLNELLTDVPNSWKIVYAPNLNIYKL.

Over 1–69 (MKHMFKNILF…LCDNMYSKKY (69 aa)) the chain is Cytoplasmic. A helical membrane pass occupies residues 70 to 90 (VILVSHLISLLLMYSVCLIVG). Over 91–97 (NINDLFS) the chain is Extracellular. The helical transmembrane segment at 98 to 118 (VLKLTYILLHTFTAINIILIL) threads the bilayer. The Cytoplasmic segment spans residues 119 to 135 (TLHATHYVEMFKSIKGE). The helical transmembrane segment at 136–156 (IFIFYIMMIFVIWCSWLFILF) threads the bilayer. Residues 157 to 181 (NNIKDLLPIVVNVNNFLYATYANNK) lie on the Extracellular side of the membrane. The chain crosses the membrane as a helical span at residues 182–202 (INIVLGFFAYLPIFYLITIIP). The Cytoplasmic portion of the chain corresponds to 203–208 (CRICYS). Residues 209 to 229 (CAFDILFFIMKVAIFSVYYLI) traverse the membrane as a helical segment. At 230–239 (TMKSYILTDN) the chain is on the extracellular side. The helical transmembrane segment at 240–260 (IFMIISALVGSLFIFVIRYII) threads the bilayer. Topologically, residues 261 to 782 (EIQRRLSFHN…YAPNLNIYKL (522 aa)) are cytoplasmic. The interval 376 to 396 (GSKEEPEAESESECVDESKEG) is disordered. Residues 381 to 390 (PEAESESECV) are compositionally biased toward acidic residues. The region spanning 423–751 (YEEKENEILK…SKWTKIEKDE (329 aa)) is the PDEase domain. The active-site Proton donor is the His-504. 504 to 508 (HNSIH) is a binding site for a nucleoside 3',5'-cyclic phosphate. His-508, His-544, Asp-545, and Asp-654 together coordinate a divalent metal cation. 3 residues coordinate a nucleoside 3',5'-cyclic phosphate: Asp-545, Asp-654, and Gln-706.

This sequence belongs to the cyclic nucleotide phosphodiesterase family. A divalent metal cation serves as cofactor.

Its subcellular location is the membrane. It localises to the endoplasmic reticulum membrane. It carries out the reaction 3',5'-cyclic GMP + H2O = GMP + H(+). It functions in the pathway purine metabolism; 3',5'-cyclic GMP degradation; GMP from 3',5'-cyclic GMP: step 1/1. Specifically hydrolyzes the second messenger cGMP, which is a key regulator of many important physiological processes. Probably by regulating cGMP levels, required for sporozoite motility and invasion of the mosquito salivary glands. The sequence is that of cGMP-specific 3',5'-cyclic phosphodiesterase gamma from Plasmodium yoelii.